The chain runs to 138 residues: Histone H2B (138 aa).

Positions 1–10 (MPPKAAEKKP) are enriched in basic and acidic residues. Positions 1–47 (MPPKAAEKKPSTAGKAPAGKAPEKKEAGKKTTAAGGEKKKRSKTRKE) are disordered. Lys-8 and Lys-9 each carry N6-acetyllysine; alternate. Residues Lys-8 and Lys-9 each participate in a glycyl lysine isopeptide (Lys-Gly) (interchain with G-Cter in SUMO); alternate cross-link. Low complexity predominate over residues 11–20 (STAGKAPAGK). Lys-15 carries the post-translational modification N6-acetyllysine. The residue at position 24 (Lys-24) is an N6-acetyllysine; alternate. Residue Lys-24 forms a Glycyl lysine isopeptide (Lys-Gly) (interchain with G-Cter in SUMO); alternate linkage. A Glycyl lysine isopeptide (Lys-Gly) (interchain with G-Cter in SUMO) cross-link involves residue Lys-25. Residue Lys-132 forms a Glycyl lysine isopeptide (Lys-Gly) (interchain with G-Cter in ubiquitin) linkage.

The protein belongs to the histone H2B family. The nucleosome is a histone octamer containing two molecules each of H2A, H2B, H3 and H4 assembled in one H3-H4 heterotetramer and two H2A-H2B heterodimers. The octamer wraps approximately 147 bp of DNA. Post-translationally, monoubiquitinated to form H2BK123ub1. H2BK123ub1 gives a specific tag for epigenetic transcriptional activation and is also prerequisite for H3K4me and H3K79me formation. H2BK123ub1 also modulates the formation of double-strand breaks during meiosis and is a prerequisite for DNA-damage checkpoint activation. In terms of processing, acetylated by GCN5 to form H2BK11ac and H2BK16ac. H2BK16ac can also be formed by ESA1. Acetylation of N-terminal lysines and particularly formation of H2BK11acK16ac has a positive effect on transcription. Sumoylation to form H2BK6su or H2BK7su, and probably also H2BK16su or H2BK17su, occurs preferentially near the telomeres and represses gene transcription.

It is found in the nucleus. The protein localises to the chromosome. In terms of biological role, core component of nucleosome. Nucleosomes wrap and compact DNA into chromatin, limiting DNA accessibility to the cellular machineries which require DNA as a template. Histones thereby play a central role in transcription regulation, DNA repair, DNA replication and chromosomal stability. DNA accessibility is regulated via a complex set of post-translational modifications of histones, also called histone code, and nucleosome remodeling. The sequence is that of Histone H2B (HTB1) from Ajellomyces capsulatus (Darling's disease fungus).